Reading from the N-terminus, the 289-residue chain is Stress response regulator protein 1 (289 aa).

Positions 77 to 136 are disordered; it reads LDCTNSEMDEEDDFEDDEDDENLGLINPLHHKSSHGQISDYSPLTPFTEPPSASLSKPSF. A compositionally biased stretch (acidic residues) spans 83–98; that stretch reads EMDEEDDFEDDEDDEN. The segment covering 127-136 has biased composition (polar residues); sequence PSASLSKPSF. Positions 163 to 281 constitute a Response regulatory domain; it reads NFLIVDDNII…YDFVMDRIDE (119 aa). A 4-aspartylphosphate modification is found at D214.

In terms of biological role, required for stress adaptation, morphogenesis and virulence. This chain is Stress response regulator protein 1 (SRR1), found in Scheffersomyces stipitis (strain ATCC 58785 / CBS 6054 / NBRC 10063 / NRRL Y-11545) (Yeast).